The chain runs to 393 residues: MQSHKILVVNAGSSSIKFQLFNDKKQVLAKGLCERIFIDGFFKLEFNQKKIEEKVQFNDHNLAVKHFLNALKKNKIITELSEIGLIGHRVVQGANYFTDAVLVDTHSLAKIKEFIKLAPLHNKPEADVIEIFLKEIKTAKNVAVFDTTFHTTIPRENYLYAVPENWEKNNLVRRYGFHGTSYKYINEFLEKKFNKKPLNLIVCHLGNGASVCAIKQGKSLNTSMGFTPLEGLIMGTRSGDIDPAIVSYIAEQQKLSCNDVVNELNKKSGMFAITGSSDMRDIFDKPEINDIAIKMYVNRVADYIAKYLNQLSGEIDSLVFTGGVGENASYCVQLIIEKVASLGFKTNSNLFGNYQDSSLISTNESKYQIFRVRTNEELMIVEDALRVSTNIKK.

Mg(2+) is bound at residue N10. K17 is an ATP binding site. R89 lines the substrate pocket. Catalysis depends on D146, which acts as the Proton donor/acceptor. ATP is bound by residues 204–208 (HLGNG), 278–280 (DMR), and 323–327 (GVGEN). Residue E376 coordinates Mg(2+).

Belongs to the acetokinase family. As to quaternary structure, homodimer. Mg(2+) is required as a cofactor. Requires Mn(2+) as cofactor.

It localises to the cytoplasm. It catalyses the reaction acetate + ATP = acetyl phosphate + ADP. Its pathway is metabolic intermediate biosynthesis; acetyl-CoA biosynthesis; acetyl-CoA from acetate: step 1/2. Catalyzes the formation of acetyl phosphate from acetate and ATP. Can also catalyze the reverse reaction. The sequence is that of Acetate kinase from Mycoplasma genitalium (strain ATCC 33530 / DSM 19775 / NCTC 10195 / G37) (Mycoplasmoides genitalium).